Here is a 153-residue protein sequence, read N- to C-terminus: Transcriptional repressor NrdR (153 aa).

A zinc finger spans residues 3-34 (CPFCNNINTQVKDSRAIEDDILIRRRRICLVC). The ATP-cone domain occupies 49 to 139 (FMVIKKNGET…VYMNFKNIND (91 aa)).

It belongs to the NrdR family. Requires Zn(2+) as cofactor.

Its function is as follows. Negatively regulates transcription of bacterial ribonucleotide reductase nrd genes and operons by binding to NrdR-boxes. This Ehrlichia canis (strain Jake) protein is Transcriptional repressor NrdR.